The primary structure comprises 364 residues: FNIP repeat-containing protein DDB_G0277323 (364 aa).

FNIP repeat units follow at residues 57–98 (MNIE…DLKY), 155–198 (YDCL…FGWT), 214–244 (LRVL…FGSS), 245–271 (FNQV…NQPI), and 295–340 (FNQP…FINN).

This is FNIP repeat-containing protein DDB_G0277323 from Dictyostelium discoideum (Social amoeba).